Reading from the N-terminus, the 70-residue chain is ATP synthase subunit c (70 aa).

A run of 2 helical transmembrane segments spans residues 4–24 and 47–67; these read IATAIIIGLGALGAGIGNGLI and FIGIGLVEALPIIGVAVGFLL.

It belongs to the ATPase C chain family. F-type ATPases have 2 components, F(1) - the catalytic core - and F(0) - the membrane proton channel. F(1) has five subunits: alpha(3), beta(3), gamma(1), delta(1), epsilon(1). F(0) has three main subunits: a(1), b(2) and c(10-14). The alpha and beta chains form an alternating ring which encloses part of the gamma chain. F(1) is attached to F(0) by a central stalk formed by the gamma and epsilon chains, while a peripheral stalk is formed by the delta and b chains.

Its subcellular location is the cell membrane. Its function is as follows. F(1)F(0) ATP synthase produces ATP from ADP in the presence of a proton or sodium gradient. F-type ATPases consist of two structural domains, F(1) containing the extramembraneous catalytic core and F(0) containing the membrane proton channel, linked together by a central stalk and a peripheral stalk. During catalysis, ATP synthesis in the catalytic domain of F(1) is coupled via a rotary mechanism of the central stalk subunits to proton translocation. In terms of biological role, key component of the F(0) channel; it plays a direct role in translocation across the membrane. A homomeric c-ring of between 10-14 subunits forms the central stalk rotor element with the F(1) delta and epsilon subunits. This is ATP synthase subunit c from Exiguobacterium sibiricum (strain DSM 17290 / CCUG 55495 / CIP 109462 / JCM 13490 / 255-15).